A 208-amino-acid chain; its full sequence is Fusaric acid resistance protein FusD (208 aa).

The chain crosses the membrane as a helical span at residues 7-29; it reads LLLSMLVSAIAFAVLFPPTAPWL.

The protein localises to the cell membrane. Its function is as follows. Involved in the resistance (detoxification) of the fungal toxin fusaric acid. This chain is Fusaric acid resistance protein FusD (fusD), found in Burkholderia cepacia (Pseudomonas cepacia).